A 179-amino-acid chain; its full sequence is Large ribosomal subunit protein uL5 (179 aa).

This sequence belongs to the universal ribosomal protein uL5 family. Part of the 50S ribosomal subunit; part of the 5S rRNA/L5/L18/L25 subcomplex. Contacts the 5S rRNA and the P site tRNA. Forms a bridge to the 30S subunit in the 70S ribosome.

In terms of biological role, this is one of the proteins that bind and probably mediate the attachment of the 5S RNA into the large ribosomal subunit, where it forms part of the central protuberance. In the 70S ribosome it contacts protein S13 of the 30S subunit (bridge B1b), connecting the 2 subunits; this bridge is implicated in subunit movement. Contacts the P site tRNA; the 5S rRNA and some of its associated proteins might help stabilize positioning of ribosome-bound tRNAs. The protein is Large ribosomal subunit protein uL5 of Shewanella pealeana (strain ATCC 700345 / ANG-SQ1).